The chain runs to 471 residues: Argininosuccinate lyase (471 aa).

The protein belongs to the lyase 1 family. Argininosuccinate lyase subfamily.

It is found in the cytoplasm. It carries out the reaction 2-(N(omega)-L-arginino)succinate = fumarate + L-arginine. Its pathway is amino-acid biosynthesis; L-arginine biosynthesis; L-arginine from L-ornithine and carbamoyl phosphate: step 3/3. The chain is Argininosuccinate lyase from Ehrlichia canis (strain Jake).